The following is a 94-amino-acid chain: Protein LURE 1.1 (94 aa).

The first 19 residues, 1–19, serve as a signal peptide directing secretion; sequence MKLIFIFLTLLIFVSSCTS. Cystine bridges form between cysteine 58/cysteine 75, cysteine 61/cysteine 82, and cysteine 65/cysteine 84. The tract at residues 67–87 is PRK6 binding; it reads RRDRYIRTCSFERKLCRCSYS.

It belongs to the DEFL family. In terms of assembly, binds to PRK6 LRRs. As to expression, expressed in the pistil. Detected exclusively in the synergid cells.

It localises to the secreted. Its function is as follows. Pollen tube attractants guiding pollen tubes to the ovular micropyle. In Arabidopsis thaliana (Mouse-ear cress), this protein is Protein LURE 1.1.